Consider the following 351-residue polypeptide: DNA polymerase IV (351 aa).

In terms of domain architecture, UmuC spans Ile3 to Gly187. Asp7 and Asp105 together coordinate Mg(2+). Residue Glu106 is part of the active site.

It belongs to the DNA polymerase type-Y family. The cofactor is Mg(2+).

The enzyme catalyses DNA(n) + a 2'-deoxyribonucleoside 5'-triphosphate = DNA(n+1) + diphosphate. Poorly processive, error-prone DNA polymerase involved in untargeted mutagenesis. Copies undamaged DNA at stalled replication forks, which arise in vivo from mismatched or misaligned primer ends. These misaligned primers can be extended by PolIV. Exhibits no 3'-5' exonuclease (proofreading) activity. May be involved in translesional synthesis. This is DNA polymerase IV from Sulfurisphaera tokodaii (strain DSM 16993 / JCM 10545 / NBRC 100140 / 7) (Sulfolobus tokodaii).